Consider the following 230-residue polypeptide: Glutathione S-transferase 2 (230 aa).

Residues 2–86 (AHFTLYSHAG…YLADKYDTDR (85 aa)) enclose the GST N-terminal domain. A GST C-terminal domain is found at 93 to 230 (DDPEYYKLIQ…EELAKAKEQH (138 aa)).

This sequence belongs to the GST superfamily.

The catalysed reaction is RX + glutathione = an S-substituted glutathione + a halide anion + H(+). Its function is as follows. Involved in the oxidative stress response and detoxification. This is Glutathione S-transferase 2 (gst2) from Schizosaccharomyces pombe (strain 972 / ATCC 24843) (Fission yeast).